The sequence spans 358 residues: Alpha-2-HS-glycoprotein (358 aa).

An N-terminal signal peptide occupies residues 1–18; the sequence is MKFFVLFLCLVQLWGCHS. Residues 27 to 133 enclose the Cystatin fetuin-A-type 1 domain; sequence ERNPACDDPE…QFSVVFAKCE (107 aa). 6 disulfides stabilise this stretch: Cys32–Cys349, Cys89–Cys100, Cys114–Cys132, Cys146–Cys149, Cys208–Cys218, and Cys229–Cys246. Asn99 is a glycosylation site (N-linked (GlcNAc...) asparagine). Phosphoserine is present on Ser134. Thr135 bears the Phosphothreonine mark. Ser138 carries the phosphoserine modification. Positions 144 to 254 constitute a Cystatin fetuin-A-type 2 domain; it reads KVCPQCPLLT…TCTVFPTQPV (111 aa). N-linked (GlcNAc...) asparagine glycans are attached at residues Asn156 and Asn176. A disordered region spans residues 257-288; it reads LPQPDAASSANPPPAADPAVSPPSSPSVPVDS. Over residues 267 to 282 the composition is skewed to pro residues; the sequence is NPPPAADPAVSPPSSP. Ser318 and Ser320 each carry phosphoserine. Positions 320-350 are disordered; it reads SGEAFGPRQKPKVTHPGVASGVGPVPPPPCP.

The protein belongs to the fetuin family. Post-translationally, phosphorylated by FAM20C in the extracellular medium. As to expression, bone marrow.

Its subcellular location is the secreted. The polypeptide is Alpha-2-HS-glycoprotein (AHSG) (Cavia porcellus (Guinea pig)).